The sequence spans 380 residues: Actinidain (380 aa).

A signal peptide spans 1 to 24; the sequence is MGLPKSFVSMSLLFFSTLLILSLA. A propeptide spans 25–126 (activation peptide); the sequence is FNAKNLTQRT…NQYEPRVGQV (102 aa). 3 cysteine pairs are disulfide-bonded: Cys-148/Cys-191, Cys-182/Cys-224, and Cys-282/Cys-332. The active site involves Cys-151. Cys-151 is a binding site for E64. Active-site residues include His-288 and Asn-308.

Belongs to the peptidase C1 family. As to expression, fruit.

It carries out the reaction Specificity close to that of papain.. Its activity is regulated as follows. Repressed by the active-site-directed cysteine protease inhibitor E64 (L-trans-epoxysuccinyl-leucylamide-(4-guanido)-butane) produced by Aspergillus japonicus. Cysteine protease responsible for the cleavage of kiwellin into kissper and KiTH. The chain is Actinidain from Actinidia chinensis var. chinensis (Chinese soft-hair kiwi).